The primary structure comprises 1582 residues: Alpha-2-macroglobulin (1582 aa).

The N-terminal stretch at 1–15 (MICLAALAVAVPARA) is a signal peptide. The isoglutamyl cysteine thioester (Cys-Gln) cross-link spans 1080-1083 (CAEQ).

The protein belongs to the protease inhibitor I39 (alpha-2-macroglobulin) family. Bacterial alpha-2-macroglobulin subfamily.

Functionally, protects the bacterial cell from host peptidases. The chain is Alpha-2-macroglobulin from Ralstonia nicotianae (strain ATCC BAA-1114 / GMI1000) (Ralstonia solanacearum).